Here is a 30-residue protein sequence, read N- to C-terminus: GLPCGESCVFIPCITTVVGCSCKNKVCYNN.

A cross-link (cyclopeptide (Gly-Asn)) is located at residues 1-30 (GLPCGESCVFIPCITTVVGCSCKNKVCYNN). Disulfide bonds link Cys-4-Cys-20, Cys-8-Cys-22, and Cys-13-Cys-27.

Post-translationally, contains 3 disulfide bonds. In terms of processing, this is a cyclic peptide.

In terms of biological role, probably participates in a plant defense mechanism. The chain is Cyclotide cter-G from Clitoria ternatea (Butterfly pea).